We begin with the raw amino-acid sequence, 592 residues long: Inactive heparanase-2 (592 aa).

A signal peptide spans 1–38 (MRVLCAFPEAMASSSSRPPSCLALVALFLALLLHLSLS). N-linked (GlcNAc...) asparagine glycans are attached at residues Asn254 and Asn392.

The protein belongs to the glycosyl hydrolase 79 family. Interacts with HPSE. Interacts with SDC1 (via glycan chains).

It is found in the secreted. The protein resides in the extracellular space. The protein localises to the extracellular matrix. Its function is as follows. Binds heparin and heparan sulfate with high affinity, but lacks heparanase activity. Inhibits HPSE, possibly by competing for its substrates (in vitro). The protein is Inactive heparanase-2 (Hpse2) of Mus musculus (Mouse).